The sequence spans 562 residues: Arginine--tRNA ligase (562 aa).

The 'HIGH' region motif lies at 129–139 (ANPTGPLHVGH).

It belongs to the class-I aminoacyl-tRNA synthetase family. In terms of assembly, monomer.

The protein localises to the cytoplasm. It carries out the reaction tRNA(Arg) + L-arginine + ATP = L-arginyl-tRNA(Arg) + AMP + diphosphate. The chain is Arginine--tRNA ligase from Xanthomonas oryzae pv. oryzae (strain KACC10331 / KXO85).